A 361-amino-acid chain; its full sequence is S-adenosylmethionine:tRNA ribosyltransferase-isomerase (361 aa).

It belongs to the QueA family. Monomer.

The protein resides in the cytoplasm. The catalysed reaction is 7-aminomethyl-7-carbaguanosine(34) in tRNA + S-adenosyl-L-methionine = epoxyqueuosine(34) in tRNA + adenine + L-methionine + 2 H(+). Its pathway is tRNA modification; tRNA-queuosine biosynthesis. In terms of biological role, transfers and isomerizes the ribose moiety from AdoMet to the 7-aminomethyl group of 7-deazaguanine (preQ1-tRNA) to give epoxyqueuosine (oQ-tRNA). This Actinobacillus pleuropneumoniae serotype 3 (strain JL03) protein is S-adenosylmethionine:tRNA ribosyltransferase-isomerase.